The primary structure comprises 342 residues: MKVSDIAGALGLKLKGPDREISGVNTLEAAGPEEISFLANPKYIPMLAGTRAAAVIVSEEYAGQVETALISANPYFDFGRTLHLFARPQGSFSGISDMAYIHPEAEIGGGCTIYPHVYIGARARIGEGTTLFPGCYVGEDCAVGENCLLYPNVTLMAATTVGDDCVLHSGVVLGADGFGFARTEYGIQKIPQIGRVHVGNDVEIGANTAIDRAVLGVTTIGDGTKMDNLVQVGHNVTIGNDCLIVAQVGISGSTHVGDRVTMAGQVGVAGHLTIGDDVTVGPKSGIARSIEPGKTMGGQPAVERDVYMRTLTVMPKLPDMYKRLRKLEKELEALKGESGRDS.

The active-site Proton acceptor is His234.

Belongs to the transferase hexapeptide repeat family. LpxD subfamily. In terms of assembly, homotrimer.

It carries out the reaction a UDP-3-O-[(3R)-3-hydroxyacyl]-alpha-D-glucosamine + a (3R)-hydroxyacyl-[ACP] = a UDP-2-N,3-O-bis[(3R)-3-hydroxyacyl]-alpha-D-glucosamine + holo-[ACP] + H(+). It participates in bacterial outer membrane biogenesis; LPS lipid A biosynthesis. Catalyzes the N-acylation of UDP-3-O-acylglucosamine using 3-hydroxyacyl-ACP as the acyl donor. Is involved in the biosynthesis of lipid A, a phosphorylated glycolipid that anchors the lipopolysaccharide to the outer membrane of the cell. In Oleidesulfovibrio alaskensis (strain ATCC BAA-1058 / DSM 17464 / G20) (Desulfovibrio alaskensis), this protein is UDP-3-O-acylglucosamine N-acyltransferase.